A 184-amino-acid polypeptide reads, in one-letter code: ATP synthase subunit b (184 aa).

A helical membrane pass occupies residues 15 to 34; sequence VQPGLIFWTLVTFVIAAVVL.

Belongs to the ATPase B chain family. As to quaternary structure, F-type ATPases have 2 components, F(1) - the catalytic core - and F(0) - the membrane proton channel. F(1) has five subunits: alpha(3), beta(3), gamma(1), delta(1), epsilon(1). F(0) has three main subunits: a(1), b(2) and c(10-14). The alpha and beta chains form an alternating ring which encloses part of the gamma chain. F(1) is attached to F(0) by a central stalk formed by the gamma and epsilon chains, while a peripheral stalk is formed by the delta and b chains.

The protein resides in the cell inner membrane. F(1)F(0) ATP synthase produces ATP from ADP in the presence of a proton or sodium gradient. F-type ATPases consist of two structural domains, F(1) containing the extramembraneous catalytic core and F(0) containing the membrane proton channel, linked together by a central stalk and a peripheral stalk. During catalysis, ATP synthesis in the catalytic domain of F(1) is coupled via a rotary mechanism of the central stalk subunits to proton translocation. In terms of biological role, component of the F(0) channel, it forms part of the peripheral stalk, linking F(1) to F(0). This chain is ATP synthase subunit b, found in Myxococcus xanthus (strain DK1622).